A 324-amino-acid chain; its full sequence is Probable acrylyl-CoA reductase AcuI (324 aa).

NADP(+)-binding positions include tyrosine 41, 156 to 159, 178 to 180, arginine 198, leucine 242, isoleucine 256, serine 267, and asparagine 313; these read SGGV and SGR.

Belongs to the zinc-containing alcohol dehydrogenase family. Acrylyl-CoA reductase subfamily. As to quaternary structure, homodimer.

The protein localises to the cytoplasm. It carries out the reaction propanoyl-CoA + NADP(+) = acryloyl-CoA + NADPH + H(+). Functionally, probably catalyzes the NADPH-dependent reduction of acrylyl-CoA to propanoyl-CoA. This chain is Probable acrylyl-CoA reductase AcuI (acuI), found in Escherichia coli (strain K12).